Reading from the N-terminus, the 398-residue chain is Lysophosphatidylserine lipase ABHD12 (398 aa).

Over residues 1–15 (MRKRTEPVTLEHERC) the composition is skewed to basic and acidic residues. The tract at residues 1–24 (MRKRTEPVTLEHERCAASGSSSSG) is disordered. Residues 1 to 74 (MRKRTEPVTL…RKSLWFRLRK (74 aa)) lie on the Cytoplasmic side of the membrane. A helical transmembrane segment spans residues 75 to 95 (ILLCVLGFYIAIPFLVKLCPG). Residues 96–398 (IQAKLIFLNF…LGKSEPERQH (303 aa)) are Extracellular-facing. A glycan (N-linked (GlcNAc...) asparagine) is linked at N123. Catalysis depends on S246, which acts as the Nucleophile. Residues D333 and H372 each act as charge relay system in the active site.

Belongs to the serine esterase family. Glycosylated.

It is found in the endoplasmic reticulum membrane. It localises to the mitochondrion. The enzyme catalyses 1-(9Z-octadecenoyl)-sn-glycero-3-phospho-L-serine + H2O = sn-glycero-3-phospho-L-serine + (9Z)-octadecenoate + H(+). It catalyses the reaction 1-(9Z-octadecenoyl)-sn-glycero-3-phospho-(1'-sn-glycerol) + H2O = sn-glycero-3-phospho-(1'-sn-glycerol) + (9Z)-octadecenoate + H(+). The catalysed reaction is 1-(9Z-octadecenoyl)-sn-glycero-3-phospho-(1D-myo-inositol) + H2O = sn-glycero-3-phospho-1D-myo-inositol + (9Z)-octadecenoate + H(+). It carries out the reaction 1-(9Z-octadecenoyl)-sn-glycero-3-phosphoethanolamine + H2O = sn-glycero-3-phosphoethanolamine + (9Z)-octadecenoate + H(+). The enzyme catalyses 1-(9Z-octadecenoyl)-sn-glycero-3-phosphocholine + H2O = 1-(9Z-octadecenoyl)-sn-glycerol + phosphocholine + H(+). It catalyses the reaction 2-(9Z-octadecenoyl)-glycerol + H2O = glycerol + (9Z)-octadecenoate + H(+). The catalysed reaction is 1-hexadecanoyl-sn-glycero-3-phospho-L-serine + H2O = sn-glycero-3-phospho-L-serine + hexadecanoate + H(+). It carries out the reaction 2-(5Z,8Z,11Z,14Z-eicosatetraenoyl)-glycerol + H2O = glycerol + (5Z,8Z,11Z,14Z)-eicosatetraenoate + H(+). The enzyme catalyses Hydrolyzes glycerol monoesters of long-chain fatty acids.. It catalyses the reaction 1-decanoylglycerol + H2O = decanoate + glycerol + H(+). The catalysed reaction is 1-dodecanoylglycerol + H2O = dodecanoate + glycerol + H(+). It carries out the reaction 1-tetradecanoylglycerol + H2O = tetradecanoate + glycerol + H(+). The enzyme catalyses 2-hexadecanoylglycerol + H2O = glycerol + hexadecanoate + H(+). It catalyses the reaction 1-(9Z-octadecenoyl)-glycerol + H2O = glycerol + (9Z)-octadecenoate + H(+). The catalysed reaction is 2-(9Z,12Z-octadecadienoyl)-glycerol + H2O = (9Z,12Z)-octadecadienoate + glycerol + H(+). It carries out the reaction 1-(5Z,8Z,11Z,14Z-eicosatetraenoyl)-glycerol + H2O = glycerol + (5Z,8Z,11Z,14Z)-eicosatetraenoate + H(+). The enzyme catalyses 1-(9Z,12Z-octadecadienoyl)-glycerol + H2O = (9Z,12Z)-octadecadienoate + glycerol + H(+). It catalyses the reaction 1-hexadecanoylglycerol + H2O = glycerol + hexadecanoate + H(+). The catalysed reaction is 1-octadecanoylglycerol + H2O = octadecanoate + glycerol + H(+). It carries out the reaction 1-octadecanoyl-2-(9,10-epoxyoctadecanoyl)-sn-glycero-3-phospho-L-serine + H2O = 9,10-epoxyoctadecanoate + 1-octadecanoyl-sn-glycero-3-phosphoserine + H(+). The enzyme catalyses 1-octadecanoyl-2-(10-hydroxyoctadecanoyl)-sn-glycero-3-phospho-L-serine + H2O = 1-octadecanoyl-sn-glycero-3-phosphoserine + 10-hydroxyoctadecanoate + H(+). It catalyses the reaction 1-hexadecanoyl-2-(10-hydroxyoctadecanoyl)-sn-glycero-3-phospho-L-serine + H2O = 10-hydroxyoctadecanoate + 1-hexadecanoyl-sn-glycero-3-phospho-L-serine + H(+). Selectively inhibited by DO264 (N-3-pyridyl-N'-(1-[3-chloro-4-{2-chloro-4-(trifluoromethoxy)phenoxy}pyridine-2-yl]piperidin-4-yl)thiourea). In terms of biological role, lysophosphatidylserine (LPS) lipase that mediates the hydrolysis of lysophosphatidylserine, a class of signaling lipids that regulates immunological and neurological processes. Represents a major lysophosphatidylserine lipase in the brain, thereby playing a key role in the central nervous system. Also able to hydrolyze oxidized phosphatidylserine; oxidized phosphatidylserine is produced in response to severe inflammatory stress and constitutes a proapoptotic 'eat me' signal. Also has monoacylglycerol (MAG) lipase activity: hydrolyzes 2-arachidonoylglycerol (2-AG), thereby acting as a regulator of endocannabinoid signaling pathways. Has a strong preference for very-long-chain lipid substrates; substrate specificity is likely due to improved catalysis and not improved substrate binding. This is Lysophosphatidylserine lipase ABHD12 from Mus musculus (Mouse).